A 64-amino-acid polypeptide reads, in one-letter code: Large ribosomal subunit protein bL35 (64 aa).

This sequence belongs to the bacterial ribosomal protein bL35 family.

This Pelodictyon phaeoclathratiforme (strain DSM 5477 / BU-1) protein is Large ribosomal subunit protein bL35.